Here is a 134-residue protein sequence, read N- to C-terminus: Protein E6 (134 aa).

Zinc fingers lie at residues 15–51 (CLQC…CQIC) and 88–124 (CYYC…CYSC).

This sequence belongs to the papillomaviridae E6 protein family. Forms homodimers. Interacts with ubiquitin-protein ligase UBE3A/E6-AP; this interaction stimulates UBE3A ubiquitin activity. Interacts with host BAK1.

It is found in the host cytoplasm. The protein localises to the host nucleus. Functionally, plays a major role in the induction and maintenance of cellular transformation. E6 associates with host UBE3A/E6-AP ubiquitin-protein ligase and modulates its activity. Protects host keratinocytes from apoptosis by mediating the degradation of host BAK1. May also inhibit host immune response. The protein is Protein E6 of Bos taurus (Bovine).